Reading from the N-terminus, the 113-residue chain is Large ribosomal subunit protein bL19 (113 aa).

Belongs to the bacterial ribosomal protein bL19 family.

Its function is as follows. This protein is located at the 30S-50S ribosomal subunit interface and may play a role in the structure and function of the aminoacyl-tRNA binding site. This chain is Large ribosomal subunit protein bL19, found in Natranaerobius thermophilus (strain ATCC BAA-1301 / DSM 18059 / JW/NM-WN-LF).